Reading from the N-terminus, the 445-residue chain is Probable D-serine dehydratase (445 aa).

K116 is subject to N6-(pyridoxal phosphate)lysine.

This sequence belongs to the serine/threonine dehydratase family. DsdA subfamily. It depends on pyridoxal 5'-phosphate as a cofactor.

The enzyme catalyses D-serine = pyruvate + NH4(+). This chain is Probable D-serine dehydratase, found in Bacillus mycoides (strain KBAB4) (Bacillus weihenstephanensis).